Consider the following 838-residue polypeptide: V-type proton ATPase 116 kDa subunit a 1 (838 aa).

Over 1-388 (MGELFRSEEM…DAYGIGTYRE (388 aa)) the chain is Cytoplasmic. Residues 389-407 (INPAPYTIITFPFLFAVMF) traverse the membrane as a helical segment. Topologically, residues 408 to 409 (GD) are vacuolar. A helical membrane pass occupies residues 410–426 (FGHGILMTLIAIWMVLR). Over 427 to 441 (ESRILSQKSDNEMFS) the chain is Cytoplasmic. A helical membrane pass occupies residues 442–471 (TVFSGRYIILLMGLFSTYTGLIYNDCFSKS). Topologically, residues 472–535 (LNMFGSSWSV…ANNKLAFLNS (64 aa)) are vacuolar. Residues 536 to 555 (FKMKMSVILGIIHMLFGVML) traverse the membrane as a helical segment. Residues 556–573 (SLLNHIYFKKPLNIYLGF) are Cytoplasmic-facing. A helical transmembrane segment spans residues 574-594 (IPEMIFMSSLFGYLVILIFYK). Residues 595 to 639 (WTAYDAHTSKEAPSPLIHFINMFLFSYGDTSNKMLYRGQKGIQCF) are Vacuolar-facing. Residues 640-659 (LVVVALLCVPWMLVAKPLVL) traverse the membrane as a helical segment. At 660–725 (RHQYLRRKHL…DTVVYQAIHT (66 aa)) the chain is on the cytoplasmic side. Residues 726-750 (IEYCLGCISNTASYLRLWALSLAHA) form a helical membrane-spanning segment. The Vacuolar segment spans residues 751 to 771 (QLSEVLWTMVIHTGLSVRSLA). The chain crosses the membrane as a helical span at residues 772-810 (GGFGLVFIFAAFATLTVAILLVMEGLSAFLHALRLHWIE). At 811–838 (FQNKFYTGTGFKFLPFSFDPIREGKFDD) the chain is on the cytoplasmic side.

Belongs to the V-ATPase 116 kDa subunit family. In terms of assembly, V-ATPase is a heteromultimeric enzyme made up of two complexes: the ATP-hydrolytic V1 complex and the proton translocation V0 complex. The V1 complex consists of three catalytic AB heterodimers that form a heterohexamer, three peripheral stalks each consisting of EG heterodimers, one central rotor including subunits D and F, and the regulatory subunits C and H. The proton translocation complex V0 consists of the proton transport subunit a, a ring of proteolipid subunits c9c'', rotary subunit d, subunits e and f, and two accessory subunits. Detected in brain (at protein level). Highest expression in brain, intermediate levels in kidney, and relatively low levels in bone and liver.

Its subcellular location is the cytoplasmic vesicle. The protein localises to the clathrin-coated vesicle membrane. It localises to the secretory vesicle. The protein resides in the synaptic vesicle membrane. It is found in the melanosome. Functionally, subunit of the V0 complex of vacuolar(H+)-ATPase (V-ATPase), a multisubunit enzyme composed of a peripheral complex (V1) that hydrolyzes ATP and a membrane integral complex (V0) that translocates protons. V-ATPase is responsible for acidifying and maintaining the pH of intracellular compartments and in some cell types, is targeted to the plasma membrane, where it is responsible for acidifying the extracellular environment. Required for assembly and activity of the vacuolar ATPase. The chain is V-type proton ATPase 116 kDa subunit a 1 (ATP6V0A1) from Gallus gallus (Chicken).